The primary structure comprises 1288 residues: 5-oxoprolinase (1288 aa).

Thr151 is modified (phosphothreonine). The interval 1248-1272 is disordered; it reads PGGGGYGDPEDPAPPPGSPPQALAF. Residue Ser1265 is modified to Phosphoserine.

Belongs to the oxoprolinase family. In terms of assembly, homodimer.

It localises to the cytoplasm. The protein localises to the cytosol. It catalyses the reaction 5-oxo-L-proline + ATP + 2 H2O = L-glutamate + ADP + phosphate + H(+). In terms of biological role, catalyzes the cleavage of 5-oxo-L-proline to form L-glutamate coupled to the hydrolysis of ATP to ADP and inorganic phosphate. The chain is 5-oxoprolinase from Homo sapiens (Human).